Reading from the N-terminus, the 201-residue chain is CASP-like protein 2D1 (201 aa).

Topologically, residues 1 to 26 are cytoplasmic; that stretch reads MRSGEGSTAAAAAAEEEKVKVAAPFR. The helical transmembrane segment at 27–47 threads the bilayer; sequence LAELGLRVCAVPLAVASVWEM. At 48-70 the chain is on the extracellular side; that stretch reads ATNKQVDETYGEVRFSDLSGFRY. Residues 71–91 form a helical membrane-spanning segment; the sequence is LVWINAITAAYSVASILLSSC. At 92–98 the chain is on the cytoplasmic side; it reads RFITRFD. Residues 99–119 form a helical membrane-spanning segment; sequence WLIFILDQASAYLLLTSASAA. Residues 120 to 148 lie on the Extracellular side of the membrane; it reads AEVVYLAREGDREVSWGEVCSYFGRFCGA. The helical transmembrane segment at 149–169 threads the bilayer; that stretch reads ATVSVALNAAALLCFMALSLI. The Cytoplasmic segment spans residues 170-201; it reads SAFRVFTKFNPPSQSNSKQQLSQEQGKPVVSG. Residues 180 to 194 show a composition bias toward polar residues; that stretch reads PPSQSNSKQQLSQEQ. Residues 180–201 form a disordered region; sequence PPSQSNSKQQLSQEQGKPVVSG.

This sequence belongs to the Casparian strip membrane proteins (CASP) family. In terms of assembly, homodimer and heterodimers.

The protein resides in the cell membrane. In Oryza sativa subsp. indica (Rice), this protein is CASP-like protein 2D1.